The chain runs to 161 residues: uncharacterized protein (161 aa).

The chain crosses the membrane as a helical span at residues 76-94; sequence ISISSQCIFNVVILSFVFT.

The protein resides in the membrane. This is an uncharacterized protein from Saccharomyces cerevisiae (strain ATCC 204508 / S288c) (Baker's yeast).